A 576-amino-acid polypeptide reads, in one-letter code: MPALSTGAGSDTGLYEILATLPAQLQPHVDSQEDLTFLWDMFGEKSLHSLVKIHEKLHYYEKENPMPVIHSATALAEELAEELQSKSLNSEIRELLKLLSKPNLKALLSVHDTVAQKSYDPVLPPMPDDIDDDEDSVKIIRLVKNREPLGATIKKDEKTGAIVVARIMRGGAADRSGLIHVGDELREVNGISVEDKKPEEIIHILAQSQGAITFKIIPSIKEEPPNNDGKMFVKALFDYYPNEDKAIPCKEAGLSFRKGDILQIMSQDDATWWQAKHEGDANPRAGLIPSKQFQERRFALRKPVVSNQPQKVPNRKSSGFRRSFRLSRKDRKTNKFMYECKKSDQYDTADVPTYEEVALYQRKPNEKYRLVILVGPVGVGVNELKRKVLIGNSQHYGVTVPHTTRGKRSQENDGVEYIFISKHLFETDIHNNKFIEYGEYKNNYYGTSLDSVRSVLAKNKICLLDVQPNSLKHLRTSEFKPFVIFIKPPTIERLRETRRNAKVISGKDERGAAKPFSDEDFEEMIQSAEAMEAQYDHFFDTTIVNDDLSAAYNELRSTLERLEMEGFWVPVSWLHS.

L27 domains follow at residues 10–63 (SDTG…YEKE) and 65–122 (PMPV…YDPV). The 82-residue stretch at 139–220 (IIRLVKNREP…AITFKIIPSI (82 aa)) folds into the PDZ domain. Positions 228–298 (DGKMFVKALF…PSKQFQERRF (71 aa)) constitute an SH3 domain. Positions 368 to 560 (YRLVILVGPV…AYNELRSTLE (193 aa)) constitute a Guanylate kinase-like domain.

Belongs to the MAGUK family.

The protein resides in the membrane. It is found in the cell junction. It localises to the tight junction. Its subcellular location is the adherens junction. In terms of biological role, acts as an important adapter that promotes epithelial cell polarity and tight junction formation. Involved in the assembly of protein complexes at sites of cell-cell contact. The protein is MAGUK p55 subfamily member 7 (mpp7) of Xenopus tropicalis (Western clawed frog).